The primary structure comprises 976 residues: Probable basic-leucine zipper transcription factor Q (976 aa).

Coiled-coil stretches lie at residues 57–110 and 136–287; these read AIDS…QYQQ and QQQQ…QQQQ. Positions 104–128 are disordered; it reads YQQQYQQPYTTPSPPDQIDYNQQLS. 2 stretches are compositionally biased toward polar residues: residues 374-385 and 393-411; these read TNFNGTNNSTPN and KLSS…SPPS. The segment at 374–499 is disordered; it reads TNFNGTNNST…PIDSNGDFDL (126 aa). Composition is skewed to low complexity over residues 420–468 and 476–490; these read PKNN…FNNN and STTT…MTSP. Positions 504 to 567 constitute a bZIP domain; the sequence is EKKKSISRIN…GVEVMRPEPE (64 aa). Positions 505–507 are basic motif; sequence KKK. Positions 509–516 are leucine-zipper; the sequence is ISRINQNL. Residues 855 to 938 are compositionally biased toward low complexity; sequence ENQSNNFGNN…VNSNNNNFNN (84 aa). Residues 855–957 form a disordered region; it reads ENQSNNFGNN…SADAIPYPST (103 aa).

Belongs to the bZIP family.

It localises to the nucleus. In terms of biological role, probable transcriptional regulator. This is Probable basic-leucine zipper transcription factor Q (bzpQ) from Dictyostelium discoideum (Social amoeba).